Here is a 243-residue protein sequence, read N- to C-terminus: Phosphoribosyl isomerase A (243 aa).

The active-site Proton acceptor is aspartate 9. The Proton donor role is filled by aspartate 128.

Belongs to the HisA/HisF family.

Its subcellular location is the cytoplasm. It catalyses the reaction 1-(5-phospho-beta-D-ribosyl)-5-[(5-phospho-beta-D-ribosylamino)methylideneamino]imidazole-4-carboxamide = 5-[(5-phospho-1-deoxy-D-ribulos-1-ylimino)methylamino]-1-(5-phospho-beta-D-ribosyl)imidazole-4-carboxamide. It carries out the reaction N-(5-phospho-beta-D-ribosyl)anthranilate = 1-(2-carboxyphenylamino)-1-deoxy-D-ribulose 5-phosphate. It functions in the pathway amino-acid biosynthesis; L-histidine biosynthesis; L-histidine from 5-phospho-alpha-D-ribose 1-diphosphate: step 4/9. Its pathway is amino-acid biosynthesis; L-tryptophan biosynthesis; L-tryptophan from chorismate: step 3/5. Its function is as follows. Involved in both the histidine and tryptophan biosynthetic pathways. In Mycolicibacterium paratuberculosis (strain ATCC BAA-968 / K-10) (Mycobacterium paratuberculosis), this protein is Phosphoribosyl isomerase A.